Here is a 439-residue protein sequence, read N- to C-terminus: Magnesium-dependent glutamate N-prenyltransferase (439 aa).

Mg(2+) contacts are provided by Asn-322, Thr-326, Glu-330, and Phe-337.

The protein belongs to the terpene synthase family. Mg(2+) serves as cofactor.

The catalysed reaction is dimethylallyl diphosphate + L-glutamate = prekainate + diphosphate. It functions in the pathway secondary metabolite biosynthesis. Its function is as follows. Magnesium-dependent glutamate N-prenyltransferase: part of the gene cluster that mediates the biosynthesis of kainic acid (KA) and derivatives, natural products with neurochemical activity acting as ionotropic glutamate receptor (iGluR) agonists, thus being neurotoxins. Catalyzes the conversion of L-glutamic acid (L-Glu) to prekainic acid in the presence of dimethylallyl diphosphate (DMAPP). Can also use geranyl diphosphate (GPP) as substrate, thus leading to the formation of N-geranyl-L-glutamic acid (L-NGG). This chain is Magnesium-dependent glutamate N-prenyltransferase, found in Digenea simplex (Marine red alga).